Here is a 242-residue protein sequence, read N- to C-terminus: Probable transcriptional regulatory protein LBA0733 (242 aa).

A disordered region spans residues 1-22 (MSGHSKWHNIQGRKNAQDAKRG).

The protein belongs to the TACO1 family.

The protein localises to the cytoplasm. This chain is Probable transcriptional regulatory protein LBA0733, found in Lactobacillus acidophilus (strain ATCC 700396 / NCK56 / N2 / NCFM).